The chain runs to 95 residues: Aspartyl/glutamyl-tRNA(Asn/Gln) amidotransferase subunit C (95 aa).

The protein belongs to the GatC family. As to quaternary structure, heterotrimer of A, B and C subunits.

It catalyses the reaction L-glutamyl-tRNA(Gln) + L-glutamine + ATP + H2O = L-glutaminyl-tRNA(Gln) + L-glutamate + ADP + phosphate + H(+). The enzyme catalyses L-aspartyl-tRNA(Asn) + L-glutamine + ATP + H2O = L-asparaginyl-tRNA(Asn) + L-glutamate + ADP + phosphate + 2 H(+). Its function is as follows. Allows the formation of correctly charged Asn-tRNA(Asn) or Gln-tRNA(Gln) through the transamidation of misacylated Asp-tRNA(Asn) or Glu-tRNA(Gln) in organisms which lack either or both of asparaginyl-tRNA or glutaminyl-tRNA synthetases. The reaction takes place in the presence of glutamine and ATP through an activated phospho-Asp-tRNA(Asn) or phospho-Glu-tRNA(Gln). The polypeptide is Aspartyl/glutamyl-tRNA(Asn/Gln) amidotransferase subunit C (Nitrosococcus oceani (strain ATCC 19707 / BCRC 17464 / JCM 30415 / NCIMB 11848 / C-107)).